Here is a 344-residue protein sequence, read N- to C-terminus: Aromatic amino acid aminotransferase (344 aa).

Lys-213 is subject to N6-(pyridoxal phosphate)lysine.

It belongs to the class-II pyridoxal-phosphate-dependent aminotransferase family. Homodimer. Pyridoxal 5'-phosphate is required as a cofactor.

The catalysed reaction is an aromatic L-alpha-amino acid + 2-oxoglutarate = an aromatic oxo-acid + L-glutamate. In terms of biological role, aminotransferase that catalyzes the conversion of aromatic amino acids and 2-oxoglutarate into corresponding aromatic oxo acids and L-glutamate. The protein is Aromatic amino acid aminotransferase of Corynebacterium diphtheriae (strain ATCC 700971 / NCTC 13129 / Biotype gravis).